The primary structure comprises 399 residues: Nuclear hormone receptor family member nhr-125 (399 aa).

The nuclear receptor DNA-binding region spans 10 to 80 (PFSCRICNQK…MGMDTTKFQY (71 aa)). NR C4-type zinc fingers lie at residues 13–33 (CRICNQKAHGNHFGVLTCRAC) and 50–63 (CQKGGCSRNFCKRC). An NR LBD domain is found at 149–392 (QLENLTEGFK…EKLQKSQFSI (244 aa)).

This sequence belongs to the nuclear hormone receptor family.

It localises to the nucleus. In terms of biological role, orphan nuclear receptor. This Caenorhabditis elegans protein is Nuclear hormone receptor family member nhr-125 (nhr-125).